A 74-amino-acid chain; its full sequence is Omwaprin-b (74 aa).

Residues 1-24 (MSSGGLLLLLGLLTLWEVLTPVSS) form the signal peptide. The 45-residue stretch at 27–71 (RPKKPGLCPPRPQKPCVKECKNDWSCPGQQKCCNYGCIDECRDPI) folds into the WAP domain. Intrachain disulfides connect C34/C59, C42/C63, C46/C58, and C52/C67.

Belongs to the venom waprin family. In terms of tissue distribution, expressed by the venom gland.

The protein resides in the secreted. Damages membranes of susceptible bacteria. Has antibacterial activity against the Gram-positive bacteria B.megaterium and S.warneri. After 45 minutes of treatment with this protein, B.megaterium have no visible pili and are smooth. Has no antibacterial activity against the Gram-positive bacteria B.thuringiensis, S.aureus, S.clavuligerus and B. anthracis, or the Gram-negative bacteria E.coli and A.tumefaciens. Has no hemolytic activity. Does not inhibit the proteinases elastase and cathepsin G. Is not toxic to mice. This is Omwaprin-b from Oxyuranus microlepidotus (Inland taipan).